Reading from the N-terminus, the 344-residue chain is DNA-directed RNA polymerase subunit alpha (344 aa).

The alpha N-terminal domain (alpha-NTD) stretch occupies residues 1–232 (MGQYTINLRE…HLFLPPFGLE (232 aa)). The alpha C-terminal domain (alpha-CTD) stretch occupies residues 270 to 344 (LIKDQFLEYS…KRFGINLKLK (75 aa)).

Belongs to the RNA polymerase alpha chain family. In plastids the minimal PEP RNA polymerase catalytic core is composed of four subunits: alpha, beta, beta', and beta''. When a (nuclear-encoded) sigma factor is associated with the core the holoenzyme is formed, which can initiate transcription.

Its subcellular location is the plastid. The protein localises to the chloroplast. The enzyme catalyses RNA(n) + a ribonucleoside 5'-triphosphate = RNA(n+1) + diphosphate. Its function is as follows. DNA-dependent RNA polymerase catalyzes the transcription of DNA into RNA using the four ribonucleoside triphosphates as substrates. The chain is DNA-directed RNA polymerase subunit alpha from Spirogyra maxima (Green alga).